Reading from the N-terminus, the 347-residue chain is Heat-inducible transcription repressor HrcA (347 aa).

This sequence belongs to the HrcA family.

In terms of biological role, negative regulator of class I heat shock genes (grpE-dnaK-dnaJ and groELS operons). Prevents heat-shock induction of these operons. This Lactococcus lactis subsp. cremoris (strain MG1363) protein is Heat-inducible transcription repressor HrcA.